A 355-amino-acid polypeptide reads, in one-letter code: Anthranilate phosphoribosyltransferase (355 aa).

Residues Gly-91, 94–95 (GD), Thr-99, 101–104 (NIST), 119–127 (KHGNRAMSS), and Ala-131 contribute to the 5-phospho-alpha-D-ribose 1-diphosphate site. Residue Gly-91 participates in anthranilate binding. Residue Ser-103 coordinates Mg(2+). Residue Asn-122 coordinates anthranilate. Arg-177 is an anthranilate binding site. 2 residues coordinate Mg(2+): Asp-234 and Glu-235.

Belongs to the anthranilate phosphoribosyltransferase family. As to quaternary structure, homodimer. Requires Mg(2+) as cofactor.

The catalysed reaction is N-(5-phospho-beta-D-ribosyl)anthranilate + diphosphate = 5-phospho-alpha-D-ribose 1-diphosphate + anthranilate. The protein operates within amino-acid biosynthesis; L-tryptophan biosynthesis; L-tryptophan from chorismate: step 2/5. In terms of biological role, participates in the tryptophan-dependent indole-3-acetic acid production, which is a phytohormone released by A.brasilense. Catalyzes the transfer of the phosphoribosyl group of 5-phosphorylribose-1-pyrophosphate (PRPP) to anthranilate to yield N-(5'-phosphoribosyl)-anthranilate (PRA). The polypeptide is Anthranilate phosphoribosyltransferase (Azospirillum brasilense).